We begin with the raw amino-acid sequence, 532 residues long: Probable calcium-binding mitochondrial carrier CBG00135 (532 aa).

EF-hand domains lie at 70–105 (EKEK…QTPH), 107–136 (PATM…NYVI), 137–172 (AHEA…MGVN), and 173–208 (LDDH…YPST). Ca(2+) contacts are provided by aspartate 83, aspartate 85, aspartate 87, serine 89, and aspartate 94. 5 residues coordinate Ca(2+): aspartate 150, asparagine 152, aspartate 154, glutamate 156, and glutamate 161. Solcar repeat units lie at residues 243–329 (GVWW…IKRW), 339–425 (LTTY…LKSC), and 436–526 (PGVL…VRKQ). Helical transmembrane passes span 249–266 (LVAG…TAPF), 304–323 (GNGI…FMSY), 349–362 (SSAG…IYPM), 400–419 (GYLP…LTVY), 442–459 (LACG…SYPL), and 501–518 (GITP…ISYV).

This sequence belongs to the mitochondrial carrier (TC 2.A.29) family.

It localises to the mitochondrion inner membrane. Functionally, calcium-dependent mitochondrial solute carrier. The chain is Probable calcium-binding mitochondrial carrier CBG00135 from Caenorhabditis briggsae.